The primary structure comprises 564 residues: MKQEPQQQQPAQQPPPAGAGVPAFLSKLWALVGEAPSNQLITWSQNGQSFLVLDEQRFAKEILPKYFKHNNMASFVRQLNMYGFRKVVHVDSGIVKLERDGLVEFQHPYFKQGREDLLEHIKRKVSSSRPEENKISQEDLSKIISSAQKVEIKQETIESRLSALKRENESLWREVAELRAKHLKQQQVIRKIVQFIVTLVQNNQLVSLKRKRPLLLNTNGPTKSNVFQQIVKEPADNNNHVPLNRTEGLKQREQISDDIIIYDVTEDVADEENTMVDEENAPITPETNEDTTSDSSNCSRSPDIVIVEDDNEEEYAPVIQGDKSTESVAVSANDPLSPVSDSTSPLMSSAVQLNNQSTLTAEDPVSMMDSILNENGVISQNINLLGKVELLDYLDSIDCSLEDFQAMLSGRQFSIDPDLLFDLFTSSVQMNPTDHIPNTKMETKGIETTKSNAGPAASQETQVSKPKSDKQLIQYTAFPLLAFLDGNPGSTVESGSSATETPSSVDKPLEVDELLESSLDPEPTQSKLVRLEPLTEAEASEATLFYLCELAPAPMDTDMPFLDN.

Residues 21 to 126 mediate DNA binding; it reads VPAFLSKLWA…LLEHIKRKVS (106 aa). Residues 133–206 form a hydrophobic repeat HR-A/B region; it reads NKISQEDLSK…VTLVQNNQLV (74 aa). A compositionally biased stretch (acidic residues) spans 271–280; sequence EENTMVDEEN. 2 disordered regions span residues 271–301 and 320–347; these read EENT…CSRS and QGDK…SPLM. Residues 390–415 form a hydrophobic repeat HR-C region; it reads LLDYLDSIDCSLEDFQAMLSGRQFSI. A compositionally biased stretch (polar residues) spans 448–465; that stretch reads TTKSNAGPAASQETQVSK. The tract at residues 448–468 is disordered; that stretch reads TTKSNAGPAASQETQVSKPKS.

Belongs to the HSF family. Homotrimer. As to expression, expressed in most tissues with the exceptions of blood and liver.

Its subcellular location is the cytoplasm. It is found in the nucleus. DNA-binding protein that specifically binds heat shock promoter elements (HSE) and activates transcription. HSF2 shows constitutive DNA binding activity, even without heat shock. The protein is Heat shock factor protein 2 (HSF2) of Gallus gallus (Chicken).